We begin with the raw amino-acid sequence, 228 residues long: Cytidylate kinase (228 aa).

12–20 (GPSGSGKGT) serves as a coordination point for ATP.

This sequence belongs to the cytidylate kinase family. Type 1 subfamily.

Its subcellular location is the cytoplasm. It catalyses the reaction CMP + ATP = CDP + ADP. It carries out the reaction dCMP + ATP = dCDP + ADP. The protein is Cytidylate kinase of Pseudomonas entomophila (strain L48).